A 535-amino-acid chain; its full sequence is Endogenous retrovirus group V member 2 Env polyprotein (535 aa).

Positions 1–21 are cleaved as a signal peptide; the sequence is MTEKFLFLYLSLLPMPLLSQA. Over 22–321 the chain is Extracellular; that stretch reads QWNENSLVSF…NTTQPRQKRA (300 aa). An N-linked (GlcNAc...) asparagine glycan is attached at Asn68. Residues 322–342 form a helical membrane-spanning segment; that stretch reads LGLILAGMGAAIGMIAPWGGF. Over 343-456 the chain is Cytoplasmic; sequence TYHDVTLRNL…VKSALPSLNW (114 aa). A helical membrane pass occupies residues 457-477; the sequence is FVPLLGPATVILLLFLFGPCF. Topologically, residues 478 to 535 are extracellular; sequence FNLLIKCVSSRIKQFHMKSPQMERYQLSVIGGPSTYKHISPLDASGQRFRETMEEFSL.

It belongs to the gamma type-C retroviral envelope protein family. As to expression, expressed in placenta.

It is found in the membrane. This chain is Endogenous retrovirus group V member 2 Env polyprotein (ERVV-2), found in Homo sapiens (Human).